The sequence spans 561 residues: Cation diffusion facilitator family protein 1 (561 aa).

Residues 1–20 (MEVTMEDRSVKADKADRDDN) show a composition bias toward basic and acidic residues. Positions 1-26 (MEVTMEDRSVKADKADRDDNNTTSTE) are disordered. Topologically, residues 1-112 (MEVTMEDRSV…SESVKGVSRS (112 aa)) are cytoplasmic. Residues 113 to 133 (LIIQIGMTVIFCALEFITGVV) traverse the membrane as a helical segment. Topologically, residues 134–136 (CSS) are extracellular. The chain crosses the membrane as a helical span at residues 137 to 157 (IAMLADSYHMAADVMALIVAF). The Cytoplasmic segment spans residues 158 to 176 (TCIKIATRPSTRLGYGWVR). A helical membrane pass occupies residues 177-197 (AETLGGFFNGIFMCTVCVLVF). Over 198-215 (QEAVGRIINVHMITHPLQ) the chain is Extracellular. The helical transmembrane segment at 216–236 (VLVIGFIGLLINLFGMFNLSG) threads the bilayer. The Cytoplasmic segment spans residues 237 to 391 (HGHSHGGGSH…NVNIHGVWLH (155 aa)). The interval 240 to 304 (SHGGGSHGHS…HTRLNGKFRS (65 aa)) is disordered. A 6 X 2 AA approximate repeats of H-G region spans residues 246 to 270 (HGHSHGGSHGHSHNNKKTKKNDGHG). Basic residues predominate over residues 247-264 (GHSHGGSHGHSHNNKKTK). Residues 392-412 (LLSDAFGSVIVMISAGFVYFL) form a helical membrane-spanning segment. Residues 413 to 420 (PTWKIAAY) are Extracellular-facing. Residues 421–441 (LDPILSISLASIMGFTAVVLV) traverse the membrane as a helical segment. Residues 442 to 561 (KTSGEKLLKQ…SVSTENEITE (120 aa)) lie on the Cytoplasmic side of the membrane.

It belongs to the cation diffusion facilitator (CDF) transporter (TC 2.A.4) family. SLC30A subfamily. As to quaternary structure, interacts with lin-45 in a zinc-dependent manner. As to expression, expressed in intestinal cells. Expressed in the vulva.

The protein resides in the basolateral cell membrane. Involved in the regulation of Pn.p cell fate determination. Involved in zinc metabolism and the decrease of the cytosolic zinc concentration which is thought to modulate Ras signaling. Involved in zinc transport from the intestinal lumen to the pseudocoelum. This chain is Cation diffusion facilitator family protein 1 (cdf-1), found in Caenorhabditis elegans.